The chain runs to 379 residues: UDP-4-amino-4-deoxy-L-arabinose--oxoglutarate aminotransferase (379 aa).

Lys182 bears the N6-(pyridoxal phosphate)lysine mark.

This sequence belongs to the DegT/DnrJ/EryC1 family. ArnB subfamily. Homodimer. Pyridoxal 5'-phosphate serves as cofactor.

The enzyme catalyses UDP-4-amino-4-deoxy-beta-L-arabinose + 2-oxoglutarate = UDP-beta-L-threo-pentopyranos-4-ulose + L-glutamate. It participates in nucleotide-sugar biosynthesis; UDP-4-deoxy-4-formamido-beta-L-arabinose biosynthesis; UDP-4-deoxy-4-formamido-beta-L-arabinose from UDP-alpha-D-glucuronate: step 2/3. It functions in the pathway bacterial outer membrane biogenesis; lipopolysaccharide biosynthesis. Catalyzes the conversion of UDP-4-keto-arabinose (UDP-Ara4O) to UDP-4-amino-4-deoxy-L-arabinose (UDP-L-Ara4N). The modified arabinose is attached to lipid A and is required for resistance to polymyxin and cationic antimicrobial peptides. The chain is UDP-4-amino-4-deoxy-L-arabinose--oxoglutarate aminotransferase from Erwinia tasmaniensis (strain DSM 17950 / CFBP 7177 / CIP 109463 / NCPPB 4357 / Et1/99).